Consider the following 329-residue polypeptide: Protein mlo2 (329 aa).

The UBR-type zinc-finger motif lies at 33 to 104 (DTCTYSMGYL…HSIPCNLRKS (72 aa)). A PHD-type zinc finger spans residues 120 to 179 (GRFCICDTVYNPETEEGTMFQCILCEDWFHEKCLQKTNKGIAIPDAETFEWLVCSECSEK).

It belongs to the UBR7 family.

In terms of biological role, not known, interfere with mitotic chromosome segregation when overexpressed. The sequence is that of Protein mlo2 (mlo2) from Schizosaccharomyces pombe (strain 972 / ATCC 24843) (Fission yeast).